The chain runs to 90 residues: Small cysteine-rich outer membrane protein OmcA (90 aa).

Positions 1–19 (MKKAVLIAAMFCGVVSLSS) are cleaved as a signal peptide. Residue Cys20 is the site of N-palmitoyl cysteine attachment. Residue Cys20 is the site of S-diacylglycerol cysteine attachment. Residues 69–90 (TECNSQSPQVKGCTSPDGRCKQ) are disordered.

In terms of assembly, part of a disulfide cross-linked outer membrane complex (COMC) composed of the major outer membrane porin (MOMP), the small cysteine-rich protein (OmcA) and the large cysteine-rich periplasmic protein (OmcB).

The protein resides in the cell outer membrane. Its function is as follows. In elementary bodies (EBs, the infectious stage, which is able to survive outside the host cell) provides the structural integrity of the outer envelope through disulfide cross-links with the large cysteine-rich periplasmic protein and the major outer membrane porin. It has been described in publications as the Sarkosyl-insoluble COMC (Chlamydia outer membrane complex), and serves as the functional equivalent of peptidoglycan. The protein is Small cysteine-rich outer membrane protein OmcA (omcA) of Chlamydia pneumoniae (Chlamydophila pneumoniae).